The primary structure comprises 962 residues: Splicing regulator ARVCF (962 aa).

Residues 8–46 adopt a coiled-coil conformation; the sequence is SAASILASVKEQEARFERLTRALEQERRHVALQLERAQQ. The disordered stretch occupies residues 95–122; sequence TVEEDPGTPTSHVSIVTSEDGTTRRTET. 2 positions are modified to phosphothreonine: Thr-102 and Thr-104. Positions 102-114 are enriched in polar residues; the sequence is TPTSHVSIVTSED. Residue Arg-170 is modified to Omega-N-methylarginine. Disordered regions lie at residues 186–253 and 266–290; these read GGGF…LPER and RSLA…RRRP. Low complexity predominate over residues 206 to 217; it reads RGLGMRPPRAGP. Ser-267 carries the post-translational modification Phosphoserine. A compositionally biased stretch (acidic residues) spans 270–280; it reads ADDEGGPELEP. 4 positions are modified to phosphoserine: Ser-332, Ser-335, Ser-343, and Ser-345. ARM repeat units lie at residues 348 to 387, 390 to 429, 433 to 467, 468 to 508, 526 to 565, and 575 to 622; these read SARK…HLCF, EGVK…NLSY, TDNK…VTGT, LWNL…NEDS, LRNV…DTDN, and MRNL…GKKA. Residues 590–614 form a disordered region; that stretch reads DRYQEAEPGPLGSAVGSQRRRRDDA. The residue at position 606 (Ser-606) is a Phosphoserine. The Nuclear localization signal signature appears at 607 to 623; it reads QRRRRDDASCFGGKKAK. Thr-642 carries the phosphothreonine modification. ARM repeat units lie at residues 646 to 686, 699 to 738, 739 to 781, and 782 to 826; these read PKRT…AAGA, TYIR…NLSL, DRRN…AVLN, and TIHE…SHVL. The required for interaction with RNA-binding proteins DDX5, HNRNPH2 and SRSF1 and with mRNAs stretch occupies residues 776–962; it reads VVAVLNTIHE…AKPQPVDSWV (187 aa). Residues 854 to 962 form a disordered region; the sequence is ATAKGPKGAL…AKPQPVDSWV (109 aa). Phosphoserine occurs at positions 864 and 871. At Thr-872 the chain carries Phosphothreonine. A compositionally biased stretch (basic and acidic residues) spans 878–887; the sequence is KSLEGEKTGS. A Phosphoserine modification is found at Ser-915. The span at 920–932 shows a compositional bias: basic and acidic residues; that stretch reads ASEKEPLKLDPSR.

The protein belongs to the beta-catenin family. As to quaternary structure, component of a ribonucleoprotein complex containing mRNAs and RNA-binding proteins including DDX5, HNRNPH2 and SRSF1 as well as ARVCF. Interacts (via the extreme C-terminus) with FRMPD2 (via the PDZ 2 domain). Interacts with CCDC85B. As to expression, found in all the examined tissues including heart, brain, liver and kidney. Found at low level in lung. Expressed in dermal connective tissue, salivary gland duct and in the corneal layer (at protein level). Expressed in arrector pili muscle (at protein level). High levels detected in epithelial cells with lower levels found in fibroblasts and T lymphocytes.

It is found in the cell junction. It localises to the adherens junction. Its subcellular location is the nucleus. The protein resides in the cytoplasm. Contributes to the regulation of alternative splicing of pre-mRNAs. The sequence is that of Splicing regulator ARVCF from Homo sapiens (Human).